A 160-amino-acid chain; its full sequence is uncharacterized protein (160 aa).

This sequence to A.fulgidus AF1717.

This is an uncharacterized protein from Bacillus subtilis (strain 168).